We begin with the raw amino-acid sequence, 179 residues long: MSRLTIYADSTPDAPLLRTEDPERIAQELSSIGVRFERWSSAVTPSPDDDEATILAAYRPYLNALMGETGAGTADVIRLRPDTPNLPALRQKFLSEHTHTEDEVRFFVHGSGNFILHVDDRVYDAHCTQGDLISVPTGIKHWFDAGETPFVTALRVFTDTTGWVAHYTGDPIADHFPAA.

Fe(2+)-binding residues include H97, H99, E103, and H141. 4 residues coordinate Ni(2+): H97, H99, E103, and H141.

The protein belongs to the acireductone dioxygenase (ARD) family. Monomer. Fe(2+) is required as a cofactor. The cofactor is Ni(2+).

It carries out the reaction 1,2-dihydroxy-5-(methylsulfanyl)pent-1-en-3-one + O2 = 3-(methylsulfanyl)propanoate + CO + formate + 2 H(+). The enzyme catalyses 1,2-dihydroxy-5-(methylsulfanyl)pent-1-en-3-one + O2 = 4-methylsulfanyl-2-oxobutanoate + formate + 2 H(+). Its pathway is amino-acid biosynthesis; L-methionine biosynthesis via salvage pathway; L-methionine from S-methyl-5-thio-alpha-D-ribose 1-phosphate: step 5/6. Functionally, catalyzes 2 different reactions between oxygen and the acireductone 1,2-dihydroxy-3-keto-5-methylthiopentene (DHK-MTPene) depending upon the metal bound in the active site. Fe-containing acireductone dioxygenase (Fe-ARD) produces formate and 2-keto-4-methylthiobutyrate (KMTB), the alpha-ketoacid precursor of methionine in the methionine recycle pathway. Ni-containing acireductone dioxygenase (Ni-ARD) produces methylthiopropionate, carbon monoxide and formate, and does not lie on the methionine recycle pathway. In Granulibacter bethesdensis (strain ATCC BAA-1260 / CGDNIH1), this protein is Acireductone dioxygenase.